Consider the following 1044-residue polypeptide: Isoleucine--tRNA ligase (1044 aa).

Residues 48–58 (PFATGLPHFGH) carry the 'HIGH' region motif. Positions 594–598 (KMSKS) match the 'KMSKS' region motif. Position 597 (lysine 597) interacts with ATP.

The protein belongs to the class-I aminoacyl-tRNA synthetase family. IleS type 2 subfamily. Monomer. Requires Zn(2+) as cofactor.

Its subcellular location is the cytoplasm. It catalyses the reaction tRNA(Ile) + L-isoleucine + ATP = L-isoleucyl-tRNA(Ile) + AMP + diphosphate. Functionally, catalyzes the attachment of isoleucine to tRNA(Ile). As IleRS can inadvertently accommodate and process structurally similar amino acids such as valine, to avoid such errors it has two additional distinct tRNA(Ile)-dependent editing activities. One activity is designated as 'pretransfer' editing and involves the hydrolysis of activated Val-AMP. The other activity is designated 'posttransfer' editing and involves deacylation of mischarged Val-tRNA(Ile). The sequence is that of Isoleucine--tRNA ligase from Borrelia duttonii (strain Ly).